We begin with the raw amino-acid sequence, 325 residues long: ATP phosphoribosyltransferase (325 aa).

The protein belongs to the ATP phosphoribosyltransferase family. Long subfamily. Mg(2+) serves as cofactor.

The protein resides in the cytoplasm. It carries out the reaction 1-(5-phospho-beta-D-ribosyl)-ATP + diphosphate = 5-phospho-alpha-D-ribose 1-diphosphate + ATP. The protein operates within amino-acid biosynthesis; L-histidine biosynthesis; L-histidine from 5-phospho-alpha-D-ribose 1-diphosphate: step 1/9. Its activity is regulated as follows. Feedback inhibited by histidine. Its function is as follows. Catalyzes the condensation of ATP and 5-phosphoribose 1-diphosphate to form N'-(5'-phosphoribosyl)-ATP (PR-ATP). Has a crucial role in the pathway because the rate of histidine biosynthesis seems to be controlled primarily by regulation of HisG enzymatic activity. This is ATP phosphoribosyltransferase from Rhodopseudomonas palustris (strain BisA53).